The primary structure comprises 88 residues: Small ribosomal subunit protein bS20 (88 aa).

The tract at residues 1–27 is disordered; it reads MANSKSAKKRALQSEKRRQHNASRRSM.

The protein belongs to the bacterial ribosomal protein bS20 family.

In terms of biological role, binds directly to 16S ribosomal RNA. In Shewanella oneidensis (strain ATCC 700550 / JCM 31522 / CIP 106686 / LMG 19005 / NCIMB 14063 / MR-1), this protein is Small ribosomal subunit protein bS20.